Here is a 518-residue protein sequence, read N- to C-terminus: Squalene monooxygenase 1,2 (518 aa).

2 helical membrane passes run 3 to 23 and 48 to 68; these read MAFVEVCLRMLLVFVLSWTIF and GPDVIIVGAGVGGSALAYALA. Residues 58–59, 78–79, Arg-86, Phe-91, Arg-158, Val-174, Asp-337, and Met-350 each bind FAD; these read VG and ER. Residues 448–468 form a helical membrane-spanning segment; that stretch reads LFYHLFVISLSSIGQLLSPFP.

This sequence belongs to the squalene monooxygenase family. It depends on FAD as a cofactor.

It localises to the membrane. It carries out the reaction squalene + reduced [NADPH--hemoprotein reductase] + O2 = (S)-2,3-epoxysqualene + oxidized [NADPH--hemoprotein reductase] + H2O + H(+). It functions in the pathway terpene metabolism; lanosterol biosynthesis; lanosterol from farnesyl diphosphate: step 2/3. Functionally, catalyzes the stereospecific oxidation of squalene to (S)-2,3-epoxysqualene, and is considered to be a rate-limiting enzyme in steroid biosynthesis. This Brassica napus (Rape) protein is Squalene monooxygenase 1,2 (SQP1,2).